We begin with the raw amino-acid sequence, 534 residues long: Autophagic-related protein 16.2 (534 aa).

7 WD repeats span residues threonine 243–serine 281, glycine 288–serine 329, glycine 330–serine 368, valine 371–serine 411, glutamate 413–leucine 452, lysine 459–valine 498, and serine 504–arginine 534.

This sequence belongs to the WD repeat tipD family. In terms of assembly, homodimer (via N-terminus). Most likely a component of a complex at least containing atg-5, lgg-3, atg-16.1 and/or atg-16.2. Interacts (via N-terminus) with atg-16.1 (via N-terminus). Interacts (via N-terminus) with atg-5. Interacts (via WD 5-6 repeats) with lgg-2; the interaction is direct. As to expression, expressed in neurons, pharyngeal muscles, body wall muscle cells and intestinal cells.

The protein resides in the cytoplasm. The protein localises to the cell membrane. In terms of biological role, most likely a component of the atg-5-atg-12-atg-16.1/atg-16.2 complex, which is recruited to the preautophagosomal membrane and associates with lgg-2 to promote autophagosome formation. Plays a role in the recruitment of lipidated lgg-1 probably to the autophagosome membrane to promote autophagosome formation. Furthermore, association with atg-5 is required for the nucleation of lgg-1 positive autophagosomes. Although its role in autophagosome formation may be distinct to the role of atg-16.2, it functions in a partially redundant manner with atg-16.1 to regulate autophagic processes. In a daf-18/PTEN- and daf-16/FOXO-dependent manner, required for maintaining the numbers of germ stem cell progenitors in the gonad during the late phases of larval development. This chain is Autophagic-related protein 16.2, found in Caenorhabditis elegans.